Consider the following 470-residue polypeptide: Cysteine--tRNA ligase (470 aa).

Position 27 (cysteine 27) interacts with Zn(2+). The 'HIGH' region motif lies at 29-39 (PTVYNYIHIGN). Residues cysteine 207, histidine 232, and glutamate 236 each contribute to the Zn(2+) site. A 'KMSKS' region motif is present at residues 264–268 (KMSKS). Position 267 (lysine 267) interacts with ATP.

The protein belongs to the class-I aminoacyl-tRNA synthetase family. In terms of assembly, monomer. Requires Zn(2+) as cofactor.

It is found in the cytoplasm. It carries out the reaction tRNA(Cys) + L-cysteine + ATP = L-cysteinyl-tRNA(Cys) + AMP + diphosphate. The polypeptide is Cysteine--tRNA ligase (Lachnoclostridium phytofermentans (strain ATCC 700394 / DSM 18823 / ISDg) (Clostridium phytofermentans)).